The sequence spans 272 residues: Hemin import ATP-binding protein HmuV (272 aa).

The ABC transporter domain occupies Leu-2 to Arg-255. Gly-34–Ser-41 is a binding site for ATP.

Belongs to the ABC transporter superfamily. Heme (hemin) importer (TC 3.A.1.14.5) family. The complex is composed of two ATP-binding proteins (HmuV), two transmembrane proteins (HmuU) and a solute-binding protein (HmuT).

The protein localises to the cell inner membrane. Its function is as follows. Part of the ABC transporter complex HmuTUV involved in hemin import. Responsible for energy coupling to the transport system. This is Hemin import ATP-binding protein HmuV from Burkholderia thailandensis (strain ATCC 700388 / DSM 13276 / CCUG 48851 / CIP 106301 / E264).